A 707-amino-acid polypeptide reads, in one-letter code: Trans-feruloyl-CoA synthase FCS1 (707 aa).

ATP-binding positions include His267 and 524 to 535 (ARAIGYPVVMKA). In terms of domain architecture, ATP-grasp spans 498–549 (KELLRPLGIAFPPSQFAANAEAAAAAARAIGYPVVMKAQAAALGHKSDAGGV).

It in the N-terminal section; belongs to the acetate CoA ligase alpha subunit family. In the C-terminal section; belongs to the acetate CoA ligase beta subunit family. Homodimer.

It carries out the reaction (E)-ferulate + ATP + CoA = (E)-feruloyl-CoA + ADP + phosphate. Catalyzes the formation of feruloyl-CoA, ADP and phosphate from ferulate, CoA and ATP. This Unknown prokaryotic organism protein is Trans-feruloyl-CoA synthase FCS1.